The chain runs to 391 residues: Isocitrate dehydrogenase [NADP] (391 aa).

Residues Ser102, Asn104, Arg108, Arg118, and Arg142 each coordinate D-threo-isocitrate. Asp283 contacts Mg(2+).

Belongs to the isocitrate and isopropylmalate dehydrogenases family. As to quaternary structure, homodimer. Requires Mg(2+) as cofactor. Mn(2+) serves as cofactor.

It catalyses the reaction D-threo-isocitrate + NADP(+) = 2-oxoglutarate + CO2 + NADPH. Functionally, catalyzes the oxidative decarboxylation of isocitrate to 2-oxoglutarate and carbon dioxide with the concomitant reduction of NADP(+). In Streptococcus salivarius, this protein is Isocitrate dehydrogenase [NADP] (icd).